The chain runs to 73 residues: Translation initiation factor IF-1 2 (73 aa).

Residues 1 to 72 (MAKEELVEFG…TKGRINYRHK (72 aa)) enclose the S1-like domain.

The protein belongs to the IF-1 family. Component of the 30S ribosomal translation pre-initiation complex which assembles on the 30S ribosome in the order IF-2 and IF-3, IF-1 and N-formylmethionyl-tRNA(fMet); mRNA recruitment can occur at any time during PIC assembly.

It localises to the cytoplasm. Functionally, one of the essential components for the initiation of protein synthesis. Stabilizes the binding of IF-2 and IF-3 on the 30S subunit to which N-formylmethionyl-tRNA(fMet) subsequently binds. Helps modulate mRNA selection, yielding the 30S pre-initiation complex (PIC). Upon addition of the 50S ribosomal subunit IF-1, IF-2 and IF-3 are released leaving the mature 70S translation initiation complex. This Cupriavidus pinatubonensis (strain JMP 134 / LMG 1197) (Cupriavidus necator (strain JMP 134)) protein is Translation initiation factor IF-1 2.